The sequence spans 226 residues: Putative methyltransferase RP459 (226 aa).

Belongs to the methyltransferase superfamily.

The chain is Putative methyltransferase RP459 from Rickettsia prowazekii (strain Madrid E).